We begin with the raw amino-acid sequence, 460 residues long: Cysteine proteinase 7 (460 aa).

The first 17 residues, Met1–Ala17, serve as a signal peptide directing secretion. Positions Lys18–Ser111 are cleaved as a propeptide — activation peptide. Intrachain disulfides connect Cys131–Cys176 and Cys167–Cys210. The active site involves Cys134. 2 N-linked (GlcNAc...) asparagine glycosylation sites follow: Asn226 and Asn252. A disulfide bridge connects residues Cys268 and Cys445. The active site involves His275. The tract at residues Gly285–Gly409 is disordered. Low complexity predominate over residues Gly294–Gly359. Residues Ala367 to Ser385 show a composition bias toward gly residues. A compositionally biased stretch (low complexity) spans Val386 to Gly409. The active site involves Asn423.

It belongs to the peptidase C1 family. Glycosylated; contains GlcNAc-alpha-1-P-Ser residues. Also N-glycosylated.

The protein localises to the lysosome. This chain is Cysteine proteinase 7 (cprG), found in Dictyostelium discoideum (Social amoeba).